The sequence spans 512 residues: Maturase K (512 aa).

It belongs to the intron maturase 2 family. MatK subfamily.

The protein resides in the plastid. Its subcellular location is the chloroplast. In terms of biological role, usually encoded in the trnK tRNA gene intron. Probably assists in splicing its own and other chloroplast group II introns. The protein is Maturase K of Soldanella alpina (Alpine snowbell).